The chain runs to 501 residues: Acid-sensing ion channel 1A (501 aa).

The Cytoplasmic portion of the chain corresponds to 1-54 (MKTSVMDLKVEPMDIDFDQPPPLQVFAHTSTLHGISHIFSYEKITAKCCLWVVF). The helical transmembrane segment at 55-71 (FLSSLTFLMYVCIDRIQ) threads the bilayer. Topologically, residues 72–429 (FYLEYPHVTK…ETIEQRKAYE (358 aa)) are extracellular. 7 disulfide bridges follow: C98/C199, C177/C184, C294/C369, C312/C365, C316/C363, C325/C347, and C327/C339. The N-linked (GlcNAc...) asparagine glycan is linked to N164. N370 carries N-linked (GlcNAc...) asparagine glycosylation. A discontinuously helical transmembrane segment spans residues 430–460 (VAGLLGDIGGQMGLFIGASILTILELFDYLY). The GAS motif; ion selectivity filter motif lies at 446-448 (GAS). At 461–501 (EVMKYRLCRCSNKKHHNNNNNTDHNAVFSLDDVNCHVSKFH) the chain is on the cytoplasmic side.

Belongs to the amiloride-sensitive sodium channel (TC 1.A.6) family. ASIC1 subfamily. Homotrimer. Heterotrimer; with other ASIC proteins producing channel with different properties. Interacts with asic1c. As to expression, expressed in central nervous system. Faintly expressed in the trunk, presumably in dorsal root ganglia.

It is found in the cell membrane. Its subcellular location is the postsynaptic cell membrane. The protein localises to the cell projection. It localises to the dendrite. The catalysed reaction is Na(+)(in) = Na(+)(out). The enzyme catalyses K(+)(in) = K(+)(out). It catalyses the reaction Li(+)(in) = Li(+)(out). It carries out the reaction Ca(2+)(in) = Ca(2+)(out). Its activity is regulated as follows. Inhibited by the diuretic drug amiloride. Functionally, forms voltage-independent, pH-gated trimeric sodium channels that act as postsynaptic excitatory receptors in the nervous system, playing a crucial role in regulating synaptic plasticity, learning, and memory. Upon extracellular pH drop this channel elicits transient, fast activating, and completely desensitizing inward currents. Displays high selectivity for sodium ions but can also permit the permeation of other cations. In Danio rerio (Zebrafish), this protein is Acid-sensing ion channel 1A (asic1a).